We begin with the raw amino-acid sequence, 2424 residues long: MARFGDEMPARYGGGGAGAAAGVVVGAAGGRGAGGSRQGGQPGAQRMYKQSMAQRARTMALYNPIPVRQNCLTVNRSLFLFSEDNVVRKYAKKITEWPPFEYMILATIIANCIVLALEQHLPDDDKTPMSERLDDTEPYFIGIFCFEAGIKIIALGFAFHKGSYLRNGWNVMDFVVVLTGILATVGTEFDLRTLRAVRVLRPLKLVSGIPSLQVVLKSIMKAMIPLLQIGLLLFFAILIFAIIGLEFYMGKFHTTCFEEGTDDIQGESPAPCGTEEPARTCPNGTRCQPYWEGPNNGITQFDNILFAVLTVFQCITMEGWTDLLYNSNDASGNTWNWLYFIPLIIIGSFFMLNLVLGVLSGEFAKERERVENRRAFLKLRRQQQIERELNGYMEWISKAEEVILAEDETDVEQRHPFDGALRRATIKKSKTDLLHPEEAEDQLADIASVGSPFARASIKSAKLENSSFFHKKERRMRFYIRRMVKTQAFYWTVLSLVALNTLCVAIVHYNQPEWLSDFLYYAEFIFLGLFMSEMFIKMYGLGTRPYFHSSFNCFDCGVIIGSIFEVIWAVIKPGTSFGISVLRALRLLRIFKVTKYWASLRNLVVSLLNSMKSIISLLFLLFLFIVVFALLGMQLFGGQFNFDEGTPPTNFDTFPAAIMTVFQILTGEDWNEVMYDGIKSQGGVQGGMVFSIYFIVLTLFGNYTLLNVFLAIAVDNLANAQELTKDEQEEEEAVNQKLALQKAKEVAEVSPLSAANMSIAMKEQQKNQKPAKSVWEQRTSEMRKQNLLASREALYSEMDPEERWKASYARHLRPDMKTHLDRPLVVDPQENRNNNTNKSRVAEPTVDQRLGQQRAEDFLRKQARHHDRARDPSAHAAAGLDARRPWAGSQEAELSREGPYGRESDHQAREGGLEPPGFWEGEAERGKAGDPHRRHAHRQGVGGSGGSRSGSPRTGTADGEPRRHRVHRRPGEDGPDDKAERRGRHREGSRPARSGEGEAEGPDGGGGGGGERRRRHRHGPPPAYDPDARRDDRERRHRRRKDTQGSGVPVSGPNLSTTRPIQQDLSRQEPPLAEDMDNLKNSRLATAEPVSPHENLSHAGLPQSPAKMGSSTDPAGPTPATAANPQNSTASRRTPNNPGNPSNPGPPKTPENSLIVTNPSTAQTNSAKTARKPDHTTVEIPPACPPPLNHTVVQVNKNANPDPLPKKEDEKKEEVDEGPGEDGPKPMPPYSSMFILSTTNPLRRLCHYILNLRYFEMCILMVIAMSSIALAAEDPVQPNAPRNNVLRYFDYVFTGVFTFEMVIKMIDLGLVLHQGAYFRDLWNILDFIVVSGALVAFAFTGNSKGKDINTIKSLRVLRVLRPLKTIKRLPKLKAVFDCVVNSLKNVFNILIVYMLFMFIFAVVAVQLFKGKFFHCTDESKEFEKDCRGKYLLYEKNEVKARDREWKKYEFHYDNVLWALLTLFTVSTGEGWPQVLKHSVDATFENQGPSPGYRMEMSIFYVVYFVVFPFFFVNIFVALIIITFQEQGDKMMEEYSLEKNERACIDFAISAKPLTRHMPQNKQSFQYRMWQFVVSPPFEYTIMAMIALNTIVLMMKFYGASVAYDNALKVFNIVFTSLFSLECLLKVLAFGILNYFRDAWNIFDFVTVLGSITDILVTEFGNNFINLSFLRLFRAARLIKLLRQGYTIRILLWTFVQSFKALPYVCLLIAMLFFIYAIIGMQVFGNIGIDMEDEDSDEDEFQITEHNNFRTFFQALMLLFRSATGEAWHNIMLSCLSGKPCDKNSGILTPECGNEFAYFYFVSFIFLCSFLMLNLFVAVIMDNFEYLTRDSSILGPHHLDEYVRVWAEYDPAAWGRMLYRDMYAMLRHMPPPLGLGKNCPARVAYKRLLRMDLPVADDNTVHFNSTLMALIRTALDIKIAKGGADKQQMDAELRKEMMAIWPNLSQKTLDLLVTPHKSTDLTVGKIYAAMMIMEYYRQSKAKKLQAMREEQNRTPLMFQRMEPPPDEGGAGQNALPSTQLDPAGGLMAHEDGLKDSPSWVTQRAQEMFQKTGTWSPERAPPADMADSQPKPQSVEMREMSQDGYSDSEHCLPMEGQARAASMPRLPAENQRRRGRPRGSDLSTICDTSPMKRSASVLGPKASRRLDDYSLERVPPEENQRHHPRRRERAHRTSERSLGRYTDVDTGLGTDLSMTTQSGDLPSREREQERGRPKDRKHRPHHHHHHHHHPGRGPGRVSPGVSARRRRRGPVARVRPARAPALAHARARARAPARLLPELRLRRARRPRPRQRRRPRRRRGGGGRALRRAPGPREPLAQDSPGRGPSVCLARAARPAGPQRLLPGPRTGQAPRARLPQKPARSVQRERRGLVLSPPPPPPGELAPRAHPARTPRPGPGDSRSRRGGRRWTASAGKGGGGPRASAPSP.

At 1-98 the chain is on the cytoplasmic side; that stretch reads MARFGDEMPA…KYAKKITEWP (98 aa). Residues 85 to 363 form an I repeat; that stretch reads NVVRKYAKKI…LVLGVLSGEF (279 aa). Residues 99-117 traverse the membrane as a helical segment; it reads PFEYMILATIIANCIVLAL. At 118–135 the chain is on the extracellular side; that stretch reads EQHLPDDDKTPMSERLDD. A helical membrane pass occupies residues 136–155; the sequence is TEPYFIGIFCFEAGIKIIAL. The Cytoplasmic portion of the chain corresponds to 156–167; the sequence is GFAFHKGSYLRN. The chain crosses the membrane as a helical span at residues 168 to 185; the sequence is GWNVMDFVVVLTGILATV. Residues 186–190 are Extracellular-facing; the sequence is GTEFD. A helical membrane pass occupies residues 191–209; sequence LRTLRAVRVLRPLKLVSGI. The Cytoplasmic segment spans residues 210–228; the sequence is PSLQVVLKSIMKAMIPLLQ. A helical membrane pass occupies residues 229–248; it reads IGLLLFFAILIFAIIGLEFY. At 249 to 335 the chain is on the extracellular side; the sequence is MGKFHTTCFE…NSNDASGNTW (87 aa). Asn-283 is a glycosylation site (N-linked (GlcNAc...) asparagine). Glu-318 contributes to the Ca(2+) binding site. A helical membrane pass occupies residues 336-360; it reads NWLYFIPLIIIGSFFMLNLVLGVLS. Over 361 to 487 the chain is Cytoplasmic; sequence GEFAKERERV…FYIRRMVKTQ (127 aa). The tract at residues 383–400 is binding to the beta subunit; the sequence is QQIERELNGYMEWISKAE. Thr-409 is subject to Phosphothreonine. A phosphoserine mark is found at Ser-448 and Ser-451. Residues 473–717 form an II repeat; that stretch reads ERRMRFYIRR…VFLAIAVDNL (245 aa). A helical transmembrane segment spans residues 488 to 506; sequence AFYWTVLSLVALNTLCVAI. Topologically, residues 507-521 are extracellular; it reads VHYNQPEWLSDFLYY. A helical transmembrane segment spans residues 522–541; it reads AEFIFLGLFMSEMFIKMYGL. At 542–549 the chain is on the cytoplasmic side; the sequence is GTRPYFHS. A helical membrane pass occupies residues 550–568; it reads SFNCFDCGVIIGSIFEVIW. Residues 569 to 578 lie on the Extracellular side of the membrane; the sequence is AVIKPGTSFG. The chain crosses the membrane as a helical span at residues 579 to 597; the sequence is ISVLRALRLLRIFKVTKYW. Residues 598–616 are Cytoplasmic-facing; the sequence is ASLRNLVVSLLNSMKSIIS. A helical transmembrane segment spans residues 617–636; it reads LLFLLFLFIVVFALLGMQLF. The Extracellular segment spans residues 637–689; the sequence is GGQFNFDEGTPPTNFDTFPAAIMTVFQILTGEDWNEVMYDGIKSQGGVQGGMV. Glu-668 provides a ligand contact to Ca(2+). Residues 690–714 form a helical membrane-spanning segment; sequence FSIYFIVLTLFGNYTLLNVFLAIAV. Over 715–1253 the chain is Cytoplasmic; the sequence is DNLANAQELT…RLCHYILNLR (539 aa). Residues Ser-750, Ser-753, and Ser-790 each carry the phosphoserine modification. The segment at 819–1229 is disordered; that stretch reads HLDRPLVVDP…GEDGPKPMPP (411 aa). Basic and acidic residues-rich tracts occupy residues 893-912, 922-931, and 969-996; these read ELSR…REGG, EAERGKAGDP, and RPGE…RSGE. The span at 1053–1065 shows a compositional bias: polar residues; that stretch reads PNLSTTRPIQQDL. A phosphoserine mark is found at Ser-1091 and Ser-1104. Residues 1110–1140 show a composition bias toward low complexity; the sequence is SSTDPAGPTPATAANPQNSTASRRTPNNPGN. A compositionally biased stretch (polar residues) spans 1151-1168; the sequence is ENSLIVTNPSTAQTNSAK. A compositionally biased stretch (basic and acidic residues) spans 1204–1214; it reads LPKKEDEKKEE. The stretch at 1240–1523 is one III repeat; the sequence is NPLRRLCHYI…IFVALIIITF (284 aa). A helical transmembrane segment spans residues 1254–1272; it reads YFEMCILMVIAMSSIALAA. Residues 1273-1288 lie on the Extracellular side of the membrane; sequence EDPVQPNAPRNNVLRY. A helical membrane pass occupies residues 1289-1308; sequence FDYVFTGVFTFEMVIKMIDL. Topologically, residues 1309–1320 are cytoplasmic; that stretch reads GLVLHQGAYFRD. A helical transmembrane segment spans residues 1321-1339; sequence LWNILDFIVVSGALVAFAF. Over 1340-1350 the chain is Extracellular; sequence TGNSKGKDINT. Residues 1351–1369 traverse the membrane as a helical segment; sequence IKSLRVLRVLRPLKTIKRL. Topologically, residues 1370–1388 are cytoplasmic; it reads PKLKAVFDCVVNSLKNVFN. The chain crosses the membrane as a helical span at residues 1389–1408; that stretch reads ILIVYMLFMFIFAVVAVQLF. The Extracellular segment spans residues 1409–1495; that stretch reads KGKFFHCTDE…QGPSPGYRME (87 aa). Glu-1469 serves as a coordination point for Ca(2+). Residues 1496 to 1520 traverse the membrane as a helical segment; the sequence is MSIFYVVYFVVFPFFFVNIFVALII. Topologically, residues 1521–1575 are cytoplasmic; the sequence is ITFQEQGDKMMEEYSLEKNERACIDFAISAKPLTRHMPQNKQSFQYRMWQFVVSP. An IV repeat occupies 1560-1823; sequence NKQSFQYRMW…LFVAVIMDNF (264 aa). Residues 1576 to 1604 traverse the membrane as a helical segment; sequence PFEYTIMAMIALNTIVLMMKFYGASVAYD. Residues 1605 to 1609 are Extracellular-facing; that stretch reads NALKV. A helical membrane pass occupies residues 1610–1629; sequence FNIVFTSLFSLECLLKVLAF. Residues 1630-1637 lie on the Cytoplasmic side of the membrane; that stretch reads GILNYFRD. A helical transmembrane segment spans residues 1638–1656; the sequence is AWNIFDFVTVLGSITDILV. Residues 1657–1665 lie on the Extracellular side of the membrane; sequence TEFGNNFIN. Asn-1665 carries N-linked (GlcNAc...) asparagine glycosylation. Residues 1666-1684 form a helical membrane-spanning segment; that stretch reads LSFLRLFRAARLIKLLRQG. The Cytoplasmic segment spans residues 1685 to 1703; the sequence is YTIRILLWTFVQSFKALPY. A helical membrane pass occupies residues 1704-1723; that stretch reads VCLLIAMLFFIYAIIGMQVF. At 1724 to 1795 the chain is on the extracellular side; the sequence is GNIGIDMEDE…ILTPECGNEF (72 aa). The chain crosses the membrane as a helical span at residues 1796 to 1820; the sequence is AYFYFVSFIFLCSFLMLNLFVAVIM. Over 1821 to 2424 the chain is Cytoplasmic; sequence DNFEYLTRDS…GGPRASAPSP (604 aa). At Thr-1993 the chain carries Phosphothreonine. Positions 1997 to 2424 are disordered; that stretch reads FQRMEPPPDE…GGPRASAPSP (428 aa). The segment covering 2037–2053 has biased composition (polar residues); the sequence is SWVTQRAQEMFQKTGTW. Phosphoserine occurs at positions 2054, 2072, 2084, 2086, 2127, and 2148. The segment covering 2074 to 2090 has biased composition (basic and acidic residues); sequence EMREMSQDGYSDSEHCL. Composition is skewed to basic and acidic residues over residues 2142 to 2159 and 2200 to 2210; these read RRLD…ENQR and PSREREQERGR. Positions 2211–2229 are enriched in basic residues; it reads PKDRKHRPHHHHHHHHHPG. Residues 2249–2262 are compositionally biased toward low complexity; the sequence is VARVRPARAPALAH. Positions 2280 to 2305 are enriched in basic residues; sequence RRARRPRPRQRRRPRRRRGGGGRALR.

It belongs to the calcium channel alpha-1 subunit (TC 1.A.1.11) family. CACNA1A subfamily. As to quaternary structure, voltage-dependent calcium channels are multisubunit complexes, consisting of alpha-1, alpha-2, beta and delta subunits in a 1:1:1:1 ratio. The channel activity is directed by the pore-forming and voltage-sensitive alpha-1 subunit. In many cases, this subunit is sufficient to generate voltage-sensitive calcium channel activity. The auxiliary subunits beta and alpha-2/delta linked by a disulfide bridge regulate the channel activity. Interacts with CABP1. Interacts with the spider omega-agatoxin-IVA (AC P30288). Interacts with TSPOAP1. Brain specific. Purkinje cells contain predominantly P-type VSCC, the Q-type being a prominent calcium current in cerebellar granule cells.

The protein localises to the cell membrane. The catalysed reaction is Ca(2+)(in) = Ca(2+)(out). Functionally, voltage-sensitive calcium channels (VSCC) mediate the entry of calcium ions into excitable cells and are also involved in a variety of calcium-dependent processes, including muscle contraction, hormone or neurotransmitter release, gene expression, cell motility, cell division and cell death. The isoform alpha-1A gives rise to P and/or Q-type calcium currents. P/Q-type calcium channels belong to the 'high-voltage activated' (HVA) group and are specifically blocked by the spider omega-agatoxin-IVA (AC P54282). They are however insensitive to dihydropyridines (DHP). The sequence is that of Voltage-dependent P/Q-type calcium channel subunit alpha-1A (CACNA1A) from Oryctolagus cuniculus (Rabbit).